Here is a 301-residue protein sequence, read N- to C-terminus: Protoheme IX farnesyltransferase (301 aa).

Transmembrane regions (helical) follow at residues 20-42 (FTEL…GMWL), 55-75 (VDVI…SGAF), 105-125 (ALMV…MTTW), 126-146 (QAGV…SLYA), 150-172 (LVSN…WFAV), 176-198 (FSIV…FYAI), 227-247 (MFFW…LGIV), 249-269 (VILA…GFKM), and 280-300 (FVYS…ISIF).

The protein belongs to the UbiA prenyltransferase family. Protoheme IX farnesyltransferase subfamily. In terms of assembly, interacts with CtaA.

It localises to the cell membrane. It carries out the reaction heme b + (2E,6E)-farnesyl diphosphate + H2O = Fe(II)-heme o + diphosphate. It functions in the pathway porphyrin-containing compound metabolism; heme O biosynthesis; heme O from protoheme: step 1/1. Its function is as follows. Converts heme B (protoheme IX) to heme O by substitution of the vinyl group on carbon 2 of heme B porphyrin ring with a hydroxyethyl farnesyl side group. The sequence is that of Protoheme IX farnesyltransferase from Listeria monocytogenes serovar 1/2a (strain ATCC BAA-679 / EGD-e).